The following is a 142-amino-acid chain: MRGTSCVGGGAESPGGAGLSEGPRGRWLRLAPVCAYFLCVSLAAVLLAVYYGLIWVPTRSPAAPAGPQPSAPSPPCAARPGVPPVPAPAAASLSCLLGVPGGPRPQLQLPLSRRRRYSDPDRRPSRQTPRETPEAAEGRRPG.

The segment covering 1–19 (MRGTSCVGGGAESPGGAGL) has biased composition (gly residues). Positions 1–22 (MRGTSCVGGGAESPGGAGLSEG) are disordered. A helical transmembrane segment spans residues 36–56 (YFLCVSLAAVLLAVYYGLIWV). Disordered regions lie at residues 61-83 (PAAP…PGVP) and 99-142 (VPGG…RRPG). Residues 64-83 (PAGPQPSAPSPPCAARPGVP) show a composition bias toward pro residues. Positions 99-111 (VPGGPRPQLQLPL) are enriched in low complexity. The span at 117–142 (YSDPDRRPSRQTPRETPEAAEGRRPG) shows a compositional bias: basic and acidic residues.

Its subcellular location is the membrane. This chain is Putative transmembrane protein INAFM1, found in Homo sapiens (Human).